The sequence spans 471 residues: Arginine biosynthesis bifunctional protein ArgJ, mitochondrial (471 aa).

Threonine 190, lysine 216, threonine 239, glutamate 327, asparagine 466, and serine 471 together coordinate substrate. The active-site Nucleophile is the threonine 239.

The protein belongs to the ArgJ family. As to quaternary structure, heterodimer of an alpha and a beta chain. In terms of processing, the alpha and beta chains are autoproteolytically processed from a single precursor protein within the mitochondrion.

It is found in the mitochondrion matrix. It catalyses the reaction N(2)-acetyl-L-ornithine + L-glutamate = N-acetyl-L-glutamate + L-ornithine. The enzyme catalyses L-glutamate + acetyl-CoA = N-acetyl-L-glutamate + CoA + H(+). It participates in amino-acid biosynthesis; L-arginine biosynthesis; L-ornithine and N-acetyl-L-glutamate from L-glutamate and N(2)-acetyl-L-ornithine (cyclic): step 1/1. The protein operates within amino-acid biosynthesis; L-arginine biosynthesis; N(2)-acetyl-L-ornithine from L-glutamate: step 1/4. Functionally, catalyzes two activities which are involved in the cyclic version of arginine biosynthesis: the synthesis of acetylglutamate from glutamate and acetyl-CoA, and of ornithine by transacetylation between acetylornithine and glutamate. The chain is Arginine biosynthesis bifunctional protein ArgJ, mitochondrial from Coprinopsis cinerea (strain Okayama-7 / 130 / ATCC MYA-4618 / FGSC 9003) (Inky cap fungus).